A 127-amino-acid chain; its full sequence is Gamma-synuclein (127 aa).

Repeat copies occupy residues 20-30 (EKTKQGVTEAA) and 31-41 (EKTKEGVMYVG). Residues 20 to 67 (EKTKQGVTEAAEKTKEGVMYVGTKTKENVVHSVTSVAEKTKEQANAVS) are 4 X 11 AA tandem repeats of [EGSA]-K-T-K-[EQ]-[GQ]-V-X(4). One copy of the 3; approximate repeat lies at 42 to 56 (TKTKENVVHSVTSVA). The stretch at 57–67 (EKTKEQANAVS) is repeat 4. A phosphoserine mark is found at serine 67 and serine 72. Residues 97-127 (KEDLKPSAPQQEGEAAKEKEEVAEEAQSGGD) are disordered. Serine 124 carries the post-translational modification Phosphoserine; by BARK1, CaMK2 and CK2.

It belongs to the synuclein family. As to quaternary structure, may be a centrosome-associated protein. Interacts with MYOC; affects its secretion and its aggregation. In terms of processing, phosphorylated. Phosphorylation by GRK5 appears to occur on residues distinct from the residue phosphorylated by other kinases.

Its subcellular location is the cytoplasm. It localises to the perinuclear region. The protein resides in the cytoskeleton. It is found in the microtubule organizing center. The protein localises to the centrosome. Its subcellular location is the spindle. Plays a role in neurofilament network integrity. May be involved in modulating axonal architecture during development and in the adult. In vitro, increases the susceptibility of neurofilament-H to calcium-dependent proteases. May also function in modulating the keratin network in skin. Activates the MAPK and Elk-1 signal transduction pathway. The sequence is that of Gamma-synuclein (SNCG) from Macaca fascicularis (Crab-eating macaque).